The chain runs to 579 residues: Chromosomal replication initiator protein DnaA (579 aa).

The interval 1–71 (MQDFWQAAAA…TALACEYWET (71 aa)) is domain I, interacts with DnaA modulators. A domain II region spans residues 71-242 (TQVSVHFVLD…QQSDTVHERS (172 aa)). Disordered stretches follow at residues 131-196 (AGAQ…SAAH) and 212-240 (EASA…TVHE). Over residues 171–183 (SQSQQSAQGRGAA) the composition is skewed to low complexity. The tract at residues 243 to 459 (RLNPILTFDN…GALRKILAFS (217 aa)) is domain III, AAA+ region. ATP contacts are provided by Gly-287, Gly-289, Lys-290, and Thr-291. The segment at 460 to 579 (NFHGKDITID…LHVLEQTLKG (120 aa)) is domain IV, binds dsDNA.

This sequence belongs to the DnaA family. As to quaternary structure, oligomerizes as a right-handed, spiral filament on DNA at oriC.

The protein localises to the cytoplasm. Its function is as follows. Plays an essential role in the initiation and regulation of chromosomal replication. ATP-DnaA binds to the origin of replication (oriC) to initiate formation of the DNA replication initiation complex once per cell cycle. Binds the DnaA box (a 9 base pair repeat at the origin) and separates the double-stranded (ds)DNA. Forms a right-handed helical filament on oriC DNA; dsDNA binds to the exterior of the filament while single-stranded (ss)DNA is stabiized in the filament's interior. The ATP-DnaA-oriC complex binds and stabilizes one strand of the AT-rich DNA unwinding element (DUE), permitting loading of DNA polymerase. After initiation quickly degrades to an ADP-DnaA complex that is not apt for DNA replication. Binds acidic phospholipids. This chain is Chromosomal replication initiator protein DnaA, found in Cupriavidus metallidurans (strain ATCC 43123 / DSM 2839 / NBRC 102507 / CH34) (Ralstonia metallidurans).